A 163-amino-acid polypeptide reads, in one-letter code: MRLTSKGRYAVTAMLDVALNSETGPVPLADISERQGISLSYLEQLFSRLRKNGLVSSVRGPGGGYLLGKDASSIAVGEVISAVDESVDATRCQGKGGCQGGDKCLTHALWRDLSERLTGFLNNITLGELVNNQEILDVSGRQHQHETQRNARTQDAIDVKLRA.

Residues 2–131 form the HTH rrf2-type domain; sequence RLTSKGRYAV…NNITLGELVN (130 aa). A DNA-binding region (H-T-H motif) is located at residues 28–51; sequence LADISERQGISLSYLEQLFSRLRK. Cys-92, Cys-98, and Cys-104 together coordinate [2Fe-2S] cluster.

[2Fe-2S] cluster serves as cofactor.

Regulates the transcription of several operons and genes involved in the biogenesis of Fe-S clusters and Fe-S-containing proteins. This Klebsiella pneumoniae (strain 342) protein is HTH-type transcriptional regulator IscR.